We begin with the raw amino-acid sequence, 65 residues long: pH-response transcription factor pacC/RIM101 (65 aa).

Residues Leu16–His40 form a C2H2-type 1 zinc finger. A C2H2-type 2; degenerate zinc finger spans residues His46–Val65.

The protein belongs to the pacC/RIM101 family.

It is found in the nucleus. Functionally, transcription factor that mediates regulation of both acid- and alkaline-expressed genes in response to ambient pH. At alkaline ambient pH, activates transcription of alkaline-expressed genes (including pac1 itself) and represses transcription of acid-expressed genes. The protein is pH-response transcription factor pacC/RIM101 (pac1) of Colletotrichum gloeosporioides (Anthracnose fungus).